We begin with the raw amino-acid sequence, 687 residues long: Acetyl-coenzyme A synthetase 2 (687 aa).

CoA contacts are provided by residues arginine 206–lysine 209 and threonine 325. ATP-binding positions include glycine 401–proline 403, aspartate 425–threonine 430, aspartate 516, and arginine 531. Serine 539 provides a ligand contact to CoA. Arginine 542 provides a ligand contact to ATP. Arginine 617 is a binding site for CoA.

It belongs to the ATP-dependent AMP-binding enzyme family.

The catalysed reaction is acetate + ATP + CoA = acetyl-CoA + AMP + diphosphate. The polypeptide is Acetyl-coenzyme A synthetase 2 (ACS2) (Eremothecium gossypii (strain ATCC 10895 / CBS 109.51 / FGSC 9923 / NRRL Y-1056) (Yeast)).